Here is a 212-residue protein sequence, read N- to C-terminus: Thymidylate kinase (212 aa).

11 to 18 (GMEGAGKS) contributes to the ATP binding site.

This sequence belongs to the thymidylate kinase family.

It catalyses the reaction dTMP + ATP = dTDP + ADP. Functionally, phosphorylation of dTMP to form dTDP in both de novo and salvage pathways of dTTP synthesis. The protein is Thymidylate kinase of Colwellia psychrerythraea (strain 34H / ATCC BAA-681) (Vibrio psychroerythus).